Here is a 2196-residue protein sequence, read N- to C-terminus: Genome polyprotein (2196 aa).

The N-myristoyl glycine; by host moiety is linked to residue G2. Residues 2–1506 (GAQVSTQKTG…HVSRAFICLQ (1505 aa)) lie on the Cytoplasmic side of the membrane. The tract at residues 568–584 (DLQGDSEHAVESAVSRV) is amphipathic alpha-helix. Catalysis depends on for protease 2A activity residues H883 and D901. C918 and C920 together coordinate Zn(2+). Residue C972 is the For protease 2A activity of the active site. Zn(2+)-binding residues include C978 and H980. The interval 1112-1184 (NNGWLKKFTE…EQSAPSQSDQ (73 aa)) is membrane-binding. Residues 1112 to 1250 (NNGWLKKFTE…SPGAGKSVAT (139 aa)) are oligomerization. The RNA-binding stretch occupies residues 1133 to 1137 (AIKIQ). The region spanning 1216–1372 (EKKMSNYIQF…SMYSQNGKIN (157 aa)) is the SF3 helicase domain. The Zn(2+) site is built by C1380, C1392, and C1397. The segment at 1380–1397 (CDEECCPVNFKKCCPLVC) adopts a C4-type; degenerate zinc-finger fold. The interval 1424 to 1431 (EYNHRHSV) is RNA-binding. An oligomerization region spans residues 1435-1440 (LEALFQ). An intramembrane segment occupies 1507-1522 (ALTTFVSVAGIIYIIY). Residues 1523-2196 (KLFAGFQGAY…TLRRKWLDSF (674 aa)) are Cytoplasmic-facing. Residue Y1532 is modified to O-(5'-phospho-RNA)-tyrosine. In terms of domain architecture, Peptidase C3 spans 1552-1730 (GPAFEFAVAM…FSAALLKHYF (179 aa)). Active-site for protease 3C activity residues include H1591, E1622, and C1698. One can recognise a RdRp catalytic domain in the interval 1961 to 2077 (GHLIAFDYSG…SYPWPIDASL (117 aa)). 2 residues coordinate Mg(2+): D1967 and D2063.

Belongs to the picornaviruses polyprotein family. Interacts with capsid protein VP1 and capsid protein VP3 to form heterotrimeric protomers. As to quaternary structure, interacts with capsid protein VP0, and capsid protein VP3 to form heterotrimeric protomers. Five protomers subsequently associate to form pentamers which serve as building blocks for the capsid. Interacts with capsid protein VP2, capsid protein VP3 and capsid protein VP4 following cleavage of capsid protein VP0. In terms of assembly, interacts with capsid protein VP1 and capsid protein VP3 in the mature capsid. Interacts with capsid protein VP0 and capsid protein VP1 to form heterotrimeric protomers. Five protomers subsequently associate to form pentamers which serve as building blocks for the capsid. Interacts with capsid protein VP4 in the mature capsid. Interacts with protein 2C; this interaction may be important for virion morphogenesis. As to quaternary structure, interacts with capsid protein VP1 and capsid protein VP3. In terms of assembly, homodimer. Homohexamer; forms a hexameric ring structure with 6-fold symmetry characteristic of AAA+ ATPases. Interacts (via N-terminus) with host RTN3 (via reticulon domain); this interaction is important for viral replication. Interacts with capsid protein VP3; this interaction may be important for virion morphogenesis. As to quaternary structure, interacts with protein 3CD. In terms of assembly, homodimer. Interacts with host GBF1. Interacts (via GOLD domain) with host ACBD3 (via GOLD domain); this interaction allows the formation of a viral protein 3A/ACBD3 heterotetramer with a 2:2 stoichiometry, which will stimulate the recruitment of host PI4KB in order to synthesize PI4P at the viral RNA replication sites. Interacts with RNA-directed RNA polymerase. As to quaternary structure, interacts with protein 3AB and with RNA-directed RNA polymerase. In terms of assembly, interacts with Viral protein genome-linked and with protein 3CD. Requires Mg(2+) as cofactor. Post-translationally, specific enzymatic cleavages in vivo by the viral proteases yield processing intermediates and the mature proteins. In terms of processing, myristoylation is required for the formation of pentamers during virus assembly. Further assembly of 12 pentamers and a molecule of genomic RNA generates the provirion. During virion maturation, immature virions are rendered infectious following cleavage of VP0 into VP4 and VP2. This maturation seems to be an autocatalytic event triggered by the presence of RNA in the capsid and it is followed by a conformational change infectious virion. Post-translationally, myristoylation is required during RNA encapsidation and formation of the mature virus particle. In terms of processing, VPg is uridylylated by the polymerase into VPg-pUpU. This acts as a nucleotide-peptide primer for the genomic RNA replication.

It is found in the virion. The protein localises to the host cytoplasm. Its subcellular location is the host cytoplasmic vesicle membrane. It localises to the host nucleus. It carries out the reaction a ribonucleoside 5'-triphosphate + H2O = a ribonucleoside 5'-diphosphate + phosphate + H(+). The catalysed reaction is Selective cleavage of Tyr-|-Gly bond in the picornavirus polyprotein.. It catalyses the reaction RNA(n) + a ribonucleoside 5'-triphosphate = RNA(n+1) + diphosphate. The enzyme catalyses Selective cleavage of Gln-|-Gly bond in the poliovirus polyprotein. In other picornavirus reactions Glu may be substituted for Gln, and Ser or Thr for Gly.. Its activity is regulated as follows. Replication or transcription is subject to high level of random mutations by the nucleotide analog ribavirin. In terms of biological role, forms an icosahedral capsid of pseudo T=3 symmetry with capsid proteins VP2 and VP3. The capsid is 300 Angstroms in diameter, composed of 60 copies of each capsid protein and enclosing the viral positive strand RNA genome. Capsid protein VP1 mainly forms the vertices of the capsid. Capsid protein VP1 interacts with host cell receptor to provide virion attachment to target host cells. This attachment induces virion internalization. Tyrosine kinases are probably involved in the entry process. After binding to its receptor, the capsid undergoes conformational changes. Capsid protein VP1 N-terminus (that contains an amphipathic alpha-helix) and capsid protein VP4 are externalized. Together, they shape a pore in the host membrane through which viral genome is translocated to host cell cytoplasm. Forms an icosahedral capsid of pseudo T=3 symmetry with capsid proteins VP2 and VP3. The capsid is 300 Angstroms in diameter, composed of 60 copies of each capsid protein and enclosing the viral positive strand RNA genome. Its function is as follows. Lies on the inner surface of the capsid shell. After binding to the host receptor, the capsid undergoes conformational changes. Capsid protein VP4 is released, Capsid protein VP1 N-terminus is externalized, and together, they shape a pore in the host membrane through which the viral genome is translocated into the host cell cytoplasm. Functionally, component of immature procapsids, which is cleaved into capsid proteins VP4 and VP2 after maturation. Allows the capsid to remain inactive before the maturation step. In terms of biological role, cysteine protease that cleaves viral polyprotein and specific host proteins. It is responsible for the autocatalytic cleavage between the P1 and P2 regions, which is the first cleavage occurring in the polyprotein. Also cleaves the host translation initiation factor EIF4G1, in order to shut down the capped cellular mRNA translation. Inhibits the host nucleus-cytoplasm protein and RNA trafficking by cleaving host members of the nuclear pores. Counteracts stress granule formation probably by antagonizing its assembly or promoting its dissassembly. Plays an essential role in the virus replication cycle by acting as a viroporin. Creates a pore in the host endoplasmic reticulum and as a consequence releases Ca2+ in the cytoplasm of infected cell. In turn, high levels of cytoplasmic calcium may trigger membrane trafficking and transport of viral ER-associated proteins to viroplasms, sites of viral genome replication. Its function is as follows. Induces and associates with structural rearrangements of intracellular membranes. Displays RNA-binding, nucleotide binding and NTPase activities. May play a role in virion morphogenesis and viral RNA encapsidation by interacting with the capsid protein VP3. Functionally, localizes the viral replication complex to the surface of membranous vesicles. Together with protein 3CD binds the Cis-Active RNA Element (CRE) which is involved in RNA synthesis initiation. Acts as a cofactor to stimulate the activity of 3D polymerase, maybe through a nucleid acid chaperone activity. In terms of biological role, localizes the viral replication complex to the surface of membranous vesicles. It inhibits host cell endoplasmic reticulum-to-Golgi apparatus transport and causes the disassembly of the Golgi complex, possibly through GBF1 interaction. This would result in depletion of MHC, trail receptors and IFN receptors at the host cell surface. Plays an essential role in viral RNA replication by recruiting ACBD3 and PI4KB at the viral replication sites, thereby allowing the formation of the rearranged membranous structures where viral replication takes place. Acts as a primer for viral RNA replication and remains covalently bound to viral genomic RNA. VPg is uridylylated prior to priming replication into VPg-pUpU. The oriI viral genomic sequence may act as a template for this. The VPg-pUpU is then used as primer on the genomic RNA poly(A) by the RNA-dependent RNA polymerase to replicate the viral genome. During genome replication, the VPg-RNA linkage is removed by the host TDP2, thereby accelerating replication. During the late stage of the replication cycle, host TDP2 is excluded from sites of viral RNA synthesis and encapsidation, allowing for the generation of progeny virions. Its function is as follows. Involved in the viral replication complex and viral polypeptide maturation. It exhibits protease activity with a specificity and catalytic efficiency that is different from protease 3C. Protein 3CD lacks polymerase activity. Protein 3CD binds to the 5'UTR of the viral genome. Functionally, replicates the viral genomic RNA on the surface of intracellular membranes. May form linear arrays of subunits that propagate along a strong head-to-tail interaction called interface-I. Covalently attaches UMP to a tyrosine of VPg, which is used to prime RNA synthesis. The positive stranded RNA genome is first replicated at virus induced membranous vesicles, creating a dsRNA genomic replication form. This dsRNA is then used as template to synthesize positive stranded RNA genomes. ss(+)RNA genomes are either translated, replicated or encapsidated. In terms of biological role, major viral protease that mediates proteolytic processing of the polyprotein. Cleaves host EIF5B, contributing to host translation shutoff. Also cleaves host PABPC1, contributing to host translation shutoff. Cleaves host NLRP1, triggers host N-glycine-mediated degradation of the autoinhibitory NLRP1 N-terminal fragment. In Homo sapiens (Human), this protein is Genome polyprotein.